We begin with the raw amino-acid sequence, 444 residues long: Abhydrolase domain-containing protein abhd-5.2 (444 aa).

Residues 162–409 (PIVLIHGFGA…SAGHHVYADD (248 aa)) form the AB hydrolase-1 domain.

This sequence belongs to the peptidase S33 family. ABHD4/ABHD5 subfamily. Interacts with atgl-1; the interaction tethers atgl-1 to lipid droplets. In terms of tissue distribution, expressed in the hypodermis and intestine.

The protein localises to the lipid droplet. In terms of biological role, acts coordinately with phospholipase atgl-1 within the lipolytic cascade to distribute stored energy to tissues to maintain energy levels during the dauer phase. Localizes atgl-1 to lipid droplets, possibly to facilitate triglyceride hydrolysis. Regulates lipid droplet size, lipid content, the exchange of lipids between lipid droplets and fusion of lipid droplets during the dauer phase. The polypeptide is Abhydrolase domain-containing protein abhd-5.2 (Caenorhabditis elegans).